The chain runs to 928 residues: Periplasmic nitrate reductase (928 aa).

Residues M1 to A33 constitute a signal peptide (tat-type signal). Positions W40–D96 constitute a 4Fe-4S Mo/W bis-MGD-type domain. C47, C50, C54, and C82 together coordinate [4Fe-4S] cluster. Mo-bis(molybdopterin guanine dinucleotide) is bound by residues K84, Q152, N177, C181, W214 to M221, Q265 to D267, M422, Q426, N532, S557 to D558, K580, D607, and T818 to S827. Substrate is bound at residue W894. Mo-bis(molybdopterin guanine dinucleotide)-binding residues include N902 and K919.

This sequence belongs to the prokaryotic molybdopterin-containing oxidoreductase family. NasA/NapA/NarB subfamily. In terms of assembly, component of the periplasmic nitrate reductase NapAB complex composed of NapA and NapB. [4Fe-4S] cluster is required as a cofactor. Mo-bis(molybdopterin guanine dinucleotide) serves as cofactor. Post-translationally, predicted to be exported by the Tat system. The position of the signal peptide cleavage has not been experimentally proven.

It is found in the periplasm. It carries out the reaction 2 Fe(II)-[cytochrome] + nitrate + 2 H(+) = 2 Fe(III)-[cytochrome] + nitrite + H2O. Its function is as follows. Catalytic subunit of the periplasmic nitrate reductase complex NapAB. Receives electrons from NapB and catalyzes the reduction of nitrate to nitrite. The protein is Periplasmic nitrate reductase of Wolinella succinogenes (strain ATCC 29543 / DSM 1740 / CCUG 13145 / JCM 31913 / LMG 7466 / NCTC 11488 / FDC 602W) (Vibrio succinogenes).